The chain runs to 454 residues: Bifunctional protein GlmU (454 aa).

A pyrophosphorylase region spans residues Met1–Arg226. UDP-N-acetyl-alpha-D-glucosamine-binding positions include Leu8 to Gly11, Lys22, Gln73, Gly78 to Thr79, Tyr100 to Asp102, Gly137, Glu151, Asn166, and Asn224. Asp102 is a Mg(2+) binding site. Position 224 (Asn224) interacts with Mg(2+). The linker stretch occupies residues Val227–Glu247. The tract at residues Gly248–Lys454 is N-acetyltransferase. Positions 330 and 348 each coordinate UDP-N-acetyl-alpha-D-glucosamine. The Proton acceptor role is filled by His360. 2 residues coordinate UDP-N-acetyl-alpha-D-glucosamine: Tyr363 and Asn374. Acetyl-CoA contacts are provided by residues Ala377, Asn383–Tyr384, Ser402, Ala420, and Arg437.

The protein in the N-terminal section; belongs to the N-acetylglucosamine-1-phosphate uridyltransferase family. It in the C-terminal section; belongs to the transferase hexapeptide repeat family. In terms of assembly, homotrimer. Requires Mg(2+) as cofactor.

The protein resides in the cytoplasm. It carries out the reaction alpha-D-glucosamine 1-phosphate + acetyl-CoA = N-acetyl-alpha-D-glucosamine 1-phosphate + CoA + H(+). It catalyses the reaction N-acetyl-alpha-D-glucosamine 1-phosphate + UTP + H(+) = UDP-N-acetyl-alpha-D-glucosamine + diphosphate. It functions in the pathway nucleotide-sugar biosynthesis; UDP-N-acetyl-alpha-D-glucosamine biosynthesis; N-acetyl-alpha-D-glucosamine 1-phosphate from alpha-D-glucosamine 6-phosphate (route II): step 2/2. It participates in nucleotide-sugar biosynthesis; UDP-N-acetyl-alpha-D-glucosamine biosynthesis; UDP-N-acetyl-alpha-D-glucosamine from N-acetyl-alpha-D-glucosamine 1-phosphate: step 1/1. The protein operates within bacterial outer membrane biogenesis; LPS lipid A biosynthesis. Catalyzes the last two sequential reactions in the de novo biosynthetic pathway for UDP-N-acetylglucosamine (UDP-GlcNAc). The C-terminal domain catalyzes the transfer of acetyl group from acetyl coenzyme A to glucosamine-1-phosphate (GlcN-1-P) to produce N-acetylglucosamine-1-phosphate (GlcNAc-1-P), which is converted into UDP-GlcNAc by the transfer of uridine 5-monophosphate (from uridine 5-triphosphate), a reaction catalyzed by the N-terminal domain. The sequence is that of Bifunctional protein GlmU from Shewanella woodyi (strain ATCC 51908 / MS32).